We begin with the raw amino-acid sequence, 383 residues long: 8-amino-7-oxononanoate synthase (383 aa).

Position 21 (arginine 21) interacts with substrate. 108-109 (GF) is a binding site for pyridoxal 5'-phosphate. Histidine 133 contributes to the substrate binding site. Pyridoxal 5'-phosphate-binding residues include serine 179, histidine 207, and threonine 233. Lysine 236 bears the N6-(pyridoxal phosphate)lysine mark. Threonine 350 provides a ligand contact to substrate.

This sequence belongs to the class-II pyridoxal-phosphate-dependent aminotransferase family. BioF subfamily. As to quaternary structure, homodimer. It depends on pyridoxal 5'-phosphate as a cofactor.

The catalysed reaction is 6-carboxyhexanoyl-[ACP] + L-alanine + H(+) = (8S)-8-amino-7-oxononanoate + holo-[ACP] + CO2. The protein operates within cofactor biosynthesis; biotin biosynthesis. In terms of biological role, catalyzes the decarboxylative condensation of pimeloyl-[acyl-carrier protein] and L-alanine to produce 8-amino-7-oxononanoate (AON), [acyl-carrier protein], and carbon dioxide. This Cronobacter sakazakii (strain ATCC BAA-894) (Enterobacter sakazakii) protein is 8-amino-7-oxononanoate synthase.